A 610-amino-acid chain; its full sequence is Ecto-NOX disulfide-thiol exchanger 2 (610 aa).

Positions 128 to 207 constitute an RRM domain; that stretch reads KTVFVGGLPE…GRLHVDFAQA (80 aa). 2 coiled-coil regions span residues 293-328 and 381-505; these read IQSA…LSGI and RREE…KESC.

This sequence belongs to the ENOX family. It depends on Cu cation as a cofactor. In terms of processing, glycosylated. In terms of tissue distribution, found in the sera of cancer patients with a wide variety of cancers including breast, prostate, lung and ovarian cancers, leukemias, and lymphomas. Not found in the serum of healthy volunteers or patients with disorders other than cancer. Probably shed into serum by cancer cells. Found on the cell borders of renal, kidney and ovarian carcinomas but not on the borders of surrounding non-cancerous stromal cells.

The protein localises to the cell membrane. The protein resides in the secreted. It is found in the extracellular space. Inhibited by the antitumor sulfonylurea LY181984, the vabilloid capsaicin, and retinoids. Functionally, may be involved in cell growth. Probably acts as a terminal oxidase of plasma electron transport from cytosolic NAD(P)H via hydroquinones to acceptors at the cell surface. Hydroquinone oxidase activity alternates with a protein disulfide-thiol interchange/oxidoreductase activity which may control physical membrane displacements associated with vesicle budding or cell enlargement. The activities oscillate with a period length of 22 minutes and play a role in control of the ultradian cellular biological clock. The chain is Ecto-NOX disulfide-thiol exchanger 2 (ENOX2) from Homo sapiens (Human).